We begin with the raw amino-acid sequence, 445 residues long: Glucose-6-phosphate isomerase (445 aa).

Residue Glu-287 is the Proton donor of the active site. Active-site residues include His-308 and Lys-422.

This sequence belongs to the GPI family.

The protein localises to the cytoplasm. It carries out the reaction alpha-D-glucose 6-phosphate = beta-D-fructose 6-phosphate. It participates in carbohydrate biosynthesis; gluconeogenesis. Its pathway is carbohydrate degradation; glycolysis; D-glyceraldehyde 3-phosphate and glycerone phosphate from D-glucose: step 2/4. Functionally, catalyzes the reversible isomerization of glucose-6-phosphate to fructose-6-phosphate. The sequence is that of Glucose-6-phosphate isomerase from Bacteroides fragilis (strain ATCC 25285 / DSM 2151 / CCUG 4856 / JCM 11019 / LMG 10263 / NCTC 9343 / Onslow / VPI 2553 / EN-2).